The chain runs to 462 residues: MVGSIEAKSLQSNGSVHHIGLNLEEKLDEFRRLLGKSEKDPLRIVSVGAGAWGSVFAALLQESYGGFRDKFQIRIWRRAGRAVDRETAEHLFEVINSREDILRRLIRRCAYLKYVEARLGDRTLYADEILKDGFCLNMVDTPLCPLKVVTNLQEAVWDADIVVNGLPSTETREVFEEISKYWKERITVPIIISLSKGIETALEPVPHIITPTKMIHQATGVPIDNVLYLGGPNIAAEIYNKEYANARICGAAKWRKPLAKFLRQPHFIVWDNSDLVTHEVMGGLKNVYAIGAGMVAALTNESATSKSVYFAHCTSEMIFITHLLAEEPEKLAGPLLADTYVTLLKGRNAWYGQMLAKGEINRDMGDSISGKGMIQGVSAVGAFYQLLSQSSLSILPSEEKKPVAPVESCPILKTLYKILITREQSTQAILQALRDETLNDPRDRIEIAQSHAFYRPSLLGQP.

Residues 48 to 53, lysine 196, and alanine 235 contribute to the NAD(+) site; that span reads GAGAWG. Lysine 196 lines the substrate pocket. The Proton acceptor role is filled by lysine 285. 2 residues coordinate NAD(+): arginine 347 and glutamine 375. 347–348 is a binding site for substrate; the sequence is RN.

This sequence belongs to the NAD-dependent glycerol-3-phosphate dehydrogenase family. Expressed in roots, leaves, flowers and siliques.

The protein resides in the cytoplasm. The protein localises to the cytosol. It catalyses the reaction sn-glycerol 3-phosphate + NAD(+) = dihydroxyacetone phosphate + NADH + H(+). Its function is as follows. Involved in cell redox homeostasis. Required for maintaining a steady state cellular NADH/NAD(+) ratio through a mitochondrial glycerol-3-phosphate redox shuttle. May function with the mitochondrial FAD-dependent glycerol-3-phosphate dehydrogenase SDP6 to shuttle reducing equivalents into the mitochondria for respiration. The sequence is that of Glycerol-3-phosphate dehydrogenase [NAD(+)] GPDHC1, cytosolic (GPDHC1) from Arabidopsis thaliana (Mouse-ear cress).